Consider the following 127-residue polypeptide: Small ribosomal subunit protein uS13 (127 aa).

This sequence belongs to the universal ribosomal protein uS13 family. As to quaternary structure, part of the 30S ribosomal subunit. Forms a loose heterodimer with protein S19. Forms two bridges to the 50S subunit in the 70S ribosome.

In terms of biological role, located at the top of the head of the 30S subunit, it contacts several helices of the 16S rRNA. In the 70S ribosome it contacts the 23S rRNA (bridge B1a) and protein L5 of the 50S subunit (bridge B1b), connecting the 2 subunits; these bridges are implicated in subunit movement. Contacts the tRNAs in the A and P-sites. The polypeptide is Small ribosomal subunit protein uS13 (Pelagibacter ubique (strain HTCC1062)).